The primary structure comprises 459 residues: Argininosuccinate lyase (459 aa).

Belongs to the lyase 1 family. Argininosuccinate lyase subfamily.

It is found in the cytoplasm. The enzyme catalyses 2-(N(omega)-L-arginino)succinate = fumarate + L-arginine. Its pathway is amino-acid biosynthesis; L-arginine biosynthesis; L-arginine from L-ornithine and carbamoyl phosphate: step 3/3. This chain is Argininosuccinate lyase, found in Buchnera aphidicola subsp. Schizaphis graminum (strain Sg).